A 115-amino-acid chain; its full sequence is Large ribosomal subunit protein bL19 (115 aa).

This sequence belongs to the bacterial ribosomal protein bL19 family.

Its function is as follows. This protein is located at the 30S-50S ribosomal subunit interface and may play a role in the structure and function of the aminoacyl-tRNA binding site. In Erwinia tasmaniensis (strain DSM 17950 / CFBP 7177 / CIP 109463 / NCPPB 4357 / Et1/99), this protein is Large ribosomal subunit protein bL19.